Consider the following 577-residue polypeptide: Zona pellucida sperm-binding protein 3 receptor (577 aa).

Residues 1-32 form the signal peptide; it reads MTAWSLHELWKTSHSTLFQVTLATVLMAPVLG. Sushi domains follow at residues 33–92, 93–154, 155–219, 220–279, 280–346, and 347–412; these read DCGP…FCAR, KRCK…ECVI, ATCE…ACEK, IVCH…TCEP, NGCI…GCER, and VCCP…SCEA. 12 disulfide bridges follow: cysteine 34–cysteine 78, cysteine 64–cysteine 90, cysteine 95–cysteine 136, cysteine 122–cysteine 152, cysteine 157–cysteine 200, cysteine 186–cysteine 217, cysteine 222–cysteine 264, cysteine 250–cysteine 277, cysteine 282–cysteine 332, cysteine 316–cysteine 344, cysteine 349–cysteine 397, and cysteine 382–cysteine 410. N-linked (GlcNAc...) asparagine glycosylation is found at asparagine 72 and asparagine 81. N-linked (GlcNAc...) asparagine glycosylation is found at asparagine 144, asparagine 195, and asparagine 204. N-linked (GlcNAc...) asparagine glycosylation is present at asparagine 335. Asparagine 426, asparagine 431, asparagine 434, asparagine 443, asparagine 462, asparagine 475, and asparagine 497 each carry an N-linked (GlcNAc...) asparagine glycan. A Sushi 7 domain is found at 451–509; it reads AVCPKPEIINGNLSVEKEIYAEMENITIQCDSGYDLVGSSNIICLENRTWYPDIPFCIM. Intrachain disulfides connect cysteine 453–cysteine 494 and cysteine 480–cysteine 507.

In terms of assembly, homomultimer; disulfide-linked. Glycosylated. As to expression, testis specific.

It is found in the cytoplasmic vesicle. Its subcellular location is the secretory vesicle. The protein localises to the acrosome lumen. Binds to ZP3 glycoprotein in egg zona pellucida. Probably involved in interactions between sperm acrosome and egg zona pellucida during and immediately following the acrosome reaction. The protein is Zona pellucida sperm-binding protein 3 receptor (Zp3r) of Rattus norvegicus (Rat).